Here is a 30-residue protein sequence, read N- to C-terminus: Phospholipase A2 acanmyotoxin-2 (30 aa).

Tyr28 and Gly30 together coordinate Ca(2+).

Ca(2+) serves as cofactor. Post-translationally, contains seven disulfide bonds. In terms of tissue distribution, expressed by the venom gland.

It localises to the secreted. It catalyses the reaction a 1,2-diacyl-sn-glycero-3-phosphocholine + H2O = a 1-acyl-sn-glycero-3-phosphocholine + a fatty acid + H(+). Snake venom phospholipase A2 (PLA2) that has myotoxic activity but no significant neurotoxicity. PLA2 catalyzes the calcium-dependent hydrolysis of the 2-acyl groups in 3-sn-phosphoglycerides. The polypeptide is Phospholipase A2 acanmyotoxin-2 (Acanthophis sp. (strain Seram) (Seram death adder)).